The sequence spans 194 residues: dITP/XTP pyrophosphatase (194 aa).

8 to 13 (TNNPHK) lines the substrate pocket. Aspartate 69 acts as the Proton acceptor in catalysis. Aspartate 69 contributes to the Mg(2+) binding site. Residues threonine 70, 150–153 (FGYD), lysine 173, and 178–179 (HR) each bind substrate.

The protein belongs to the HAM1 NTPase family. As to quaternary structure, homodimer. Mg(2+) is required as a cofactor.

The enzyme catalyses XTP + H2O = XMP + diphosphate + H(+). The catalysed reaction is dITP + H2O = dIMP + diphosphate + H(+). It catalyses the reaction ITP + H2O = IMP + diphosphate + H(+). Its function is as follows. Pyrophosphatase that catalyzes the hydrolysis of nucleoside triphosphates to their monophosphate derivatives, with a high preference for the non-canonical purine nucleotides XTP (xanthosine triphosphate), dITP (deoxyinosine triphosphate) and ITP. Seems to function as a house-cleaning enzyme that removes non-canonical purine nucleotides from the nucleotide pool, thus preventing their incorporation into DNA/RNA and avoiding chromosomal lesions. This is dITP/XTP pyrophosphatase from Porphyromonas gingivalis (strain ATCC BAA-308 / W83).